Consider the following 1598-residue polypeptide: Mushroom body large-type Kenyon cell-specific protein 1 (1598 aa).

Disordered regions lie at residues 83-105 (PGNL…SLPA), 140-387 (RHHH…SDGI), 436-462 (PHDD…PMSV), and 495-525 (PLVG…SQDN). Basic residues predominate over residues 140–151 (RHHHLQNHHHHL). Residues 164–174 (QQQQQQQQRQQ) show a composition bias toward low complexity. The span at 175-191 (QRQEERRLRPDEIKVEV) shows a compositional bias: basic and acidic residues. Residues 210 to 263 (STDASTPATVTTTGATTTLPAASATGTGPATPSAVVATSNATAAMTTGTTTIPT) are compositionally biased toward low complexity. The segment covering 275-291 (EGADDRDDDEENEEEED) has biased composition (acidic residues). Composition is skewed to basic and acidic residues over residues 292 to 305 (GRGQ…LKLD), 315 to 324 (LRREKDRGSR), and 335 to 346 (DGTKERTEEVAL). The residue at position 444 (serine 444) is a Phosphoserine; by MAPK. Residues 445-461 (PQSDSSSSSRSAESPMS) are compositionally biased toward low complexity. The HTH psq-type 1 domain occupies 582–634 (VGAGGGRRAYTEEELQAALRDIQSGKLGTRRAAVIYGIPRSTLRNKVYKLAME). Residues 610-630 (TRRAAVIYGIPRSTLRNKVYK) constitute a DNA-binding region (H-T-H motif). 6 disordered regions span residues 636–705 (ERDA…SGAE), 797–877 (RLSK…DSAQ), 962–1045 (GQTV…NYDR), 1082–1145 (ERHL…NGIK), 1248–1283 (ETSA…NGSF), and 1301–1598 (RAMT…SVEQ). Positions 653–687 (APATTITTITTTTTTTTTTTTTTTTPNTTQNASAT) are enriched in low complexity. Residues 694-705 (DEVDDKELSGAE) are compositionally biased toward acidic residues. Residues 820–855 (THPQAQAQAQPQQQQQQQQQQPQQQQQQQQQQQQQQ) are compositionally biased toward low complexity. Gly residues predominate over residues 965-975 (VSGGGMGGCQP). A compositionally biased stretch (low complexity) spans 1003-1021 (ANAQQGQAQAQAKPQSQEA). Residues 1034–1086 (RPKRGKYRNYDRDSLVEAVRAVQRGEMSVHRAGSYYGVPHSTLEYKVKERHLM) form the HTH psq-type 2 domain. The H-T-H motif DNA-binding region spans 1062 to 1082 (VHRAGSYYGVPHSTLEYKVKE). The segment covering 1093-1102 (QKQSDDKTKE) has biased composition (basic and acidic residues). Residues 1103-1120 (TSTVTAAAAATNIRPGTA) are compositionally biased toward low complexity. Over residues 1309–1318 (QQQQASSQQQ) the composition is skewed to low complexity. Composition is skewed to basic and acidic residues over residues 1383–1392 (DRGRNDDGSD) and 1407–1442 (GSRD…DRKT). Positions 1447–1466 (PQQPQQQQQQQQQQQQQQQQ) are enriched in low complexity. Positions 1481–1497 (TDKKSACDSKLIVDHSS) are enriched in basic and acidic residues. The span at 1501 to 1547 (QQQQPQQQQQQQQQQQPQQQSQQPQQQQPQPQQQQQQQQQQQPQQQQ) shows a compositional bias: low complexity. The segment covering 1562–1577 (RGYNSGNNRSGEQANS) has biased composition (polar residues).

As to quaternary structure, homodimer. In terms of tissue distribution, large-type Kenyon cells of mushroom body.

It localises to the nucleus. In terms of biological role, transcriptional activator which binds to the consensus sequence 5'-CCCTATCGATCGATCTCTACCT-3'. May play a role in higher-order sensory processing. In Apis mellifera (Honeybee), this protein is Mushroom body large-type Kenyon cell-specific protein 1 (Mblk-1).